The following is a 242-amino-acid chain: Uridylate kinase (242 aa).

15-18 contacts ATP; that stretch reads KLSG. G57 is a binding site for UMP. Positions 58 and 62 each coordinate ATP. UMP contacts are provided by residues D78 and 139–146; that span reads TGNPFFTT. ATP contacts are provided by T166, Y172, and D175.

The protein belongs to the UMP kinase family. As to quaternary structure, homohexamer.

It is found in the cytoplasm. It carries out the reaction UMP + ATP = UDP + ADP. The protein operates within pyrimidine metabolism; CTP biosynthesis via de novo pathway; UDP from UMP (UMPK route): step 1/1. Its activity is regulated as follows. Inhibited by UTP. Functionally, catalyzes the reversible phosphorylation of UMP to UDP. This Acinetobacter baumannii (strain ATCC 17978 / DSM 105126 / CIP 53.77 / LMG 1025 / NCDC KC755 / 5377) protein is Uridylate kinase.